We begin with the raw amino-acid sequence, 506 residues long: Cysteine--tRNA ligase (506 aa).

Cys43 is a binding site for Zn(2+). A 'HIGH' region motif is present at residues 45–55; that stretch reads VTVYDLCHLGH. Zn(2+) is bound by residues Cys237, His262, and Glu266. The short motif at 294 to 298 is the 'KMSKS' region element; sequence KMSKS. An ATP-binding site is contributed by Lys297.

This sequence belongs to the class-I aminoacyl-tRNA synthetase family. In terms of assembly, monomer. The cofactor is Zn(2+).

The protein resides in the cytoplasm. It carries out the reaction tRNA(Cys) + L-cysteine + ATP = L-cysteinyl-tRNA(Cys) + AMP + diphosphate. The protein is Cysteine--tRNA ligase of Synechococcus sp. (strain JA-3-3Ab) (Cyanobacteria bacterium Yellowstone A-Prime).